We begin with the raw amino-acid sequence, 194 residues long: Xanthine phosphoribosyltransferase (194 aa).

Leu20 and Asn27 together coordinate xanthine. 128 to 132 is a 5-phospho-alpha-D-ribose 1-diphosphate binding site; it reads ANGQA. Lys156 is a xanthine binding site.

It belongs to the purine/pyrimidine phosphoribosyltransferase family. Xpt subfamily. In terms of assembly, homodimer.

It localises to the cytoplasm. It carries out the reaction XMP + diphosphate = xanthine + 5-phospho-alpha-D-ribose 1-diphosphate. The protein operates within purine metabolism; XMP biosynthesis via salvage pathway; XMP from xanthine: step 1/1. In terms of biological role, converts the preformed base xanthine, a product of nucleic acid breakdown, to xanthosine 5'-monophosphate (XMP), so that it can be reused for RNA or DNA synthesis. The polypeptide is Xanthine phosphoribosyltransferase (xpt) (Bacillus subtilis (strain 168)).